We begin with the raw amino-acid sequence, 256 residues long: DNA repair protein RecO (256 aa).

Belongs to the RecO family.

Functionally, involved in DNA repair and RecF pathway recombination. The protein is DNA repair protein RecO of Pelotomaculum thermopropionicum (strain DSM 13744 / JCM 10971 / SI).